Reading from the N-terminus, the 160-residue chain is Ureidoglycolate lyase (160 aa).

This sequence belongs to the ureidoglycolate lyase family. As to quaternary structure, homodimer. Ni(2+) is required as a cofactor.

The enzyme catalyses (S)-ureidoglycolate = urea + glyoxylate. The protein operates within nitrogen metabolism; (S)-allantoin degradation. Functionally, catalyzes the catabolism of the allantoin degradation intermediate (S)-ureidoglycolate, generating urea and glyoxylate. Involved in the anaerobic utilization of allantoin as sole nitrogen source. Reinforces the induction of genes involved in the degradation of allantoin and glyoxylate by producing glyoxylate. The sequence is that of Ureidoglycolate lyase from Shigella flexneri serotype 5b (strain 8401).